A 725-amino-acid polypeptide reads, in one-letter code: Mitochondrial 15S rRNA processing factor CCM1 (725 aa).

The transit peptide at 1 to 21 directs the protein to the mitochondrion; the sequence is MRLSRIGTPKVSVTRVIPVRN. PPR repeat units lie at residues 189 to 223, 224 to 259, 260 to 290, 296 to 330, 333 to 363, 401 to 435, and 601 to 635; these read SAVD…GISP, DRYL…GWAP, TDYT…MKLK, NKKI…SVAT, DTTA…LETE, NEKL…RFKM, and NHDI…RKTP.

The protein belongs to the CCM1 family. In terms of assembly, binds to mitochondrial small subunit 15S rRNA.

It is found in the mitochondrion. Its function is as follows. Regulates mitochondrial small subunit maturation by controlling 15S rRNA 5'-end processing. Localizes to the 5' precursor of the 15S rRNA in a position that is subsequently occupied by mS47 in the mature yeast mtSSU. Uses structure and sequence-specific RNA recognition, binding to a single-stranded region of the precursor and specifically recognizing bases -6 to -1. The exchange of Ccm1 for mS47 is coupled to the irreversible removal of precursor rRNA that is accompanied by conformational changes of the mitoribosomal proteins uS5m and mS26. These conformational changes signal completion of 5'-end rRNA processing through protection of the mature 5'-end of the 15S rRNA and stabilization of mS47. The removal of the 5' precursor together with the dissociation of Ccm1 may be catalyzed by the 5'-3' exoribonuclease Pet127. Involved in the specific removal of group I introns in mitochondrial encoded transcripts. This chain is Mitochondrial 15S rRNA processing factor CCM1 (CCM1), found in Komagataella phaffii (strain GS115 / ATCC 20864) (Yeast).